Here is a 406-residue protein sequence, read N- to C-terminus: Peptide chain release factor PrfB3, chloroplastic (406 aa).

Belongs to the prokaryotic/mitochondrial release factor family. Interacts with PDE338.

It localises to the plastid. The protein localises to the chloroplast stroma. It is found in the chloroplast. Involved in the light- and stress-dependent regulation of stability of 3' processed petB transcripts, thus regulating cytochrome b6 accumulation, a rate-limiting step in photosynthetic electron transport. May be recruited to specifically protect petB transcripts against 3'-5' exonucleolytic attack by masking the 3' ends. Does not function as release factor. This chain is Peptide chain release factor PrfB3, chloroplastic, found in Arabidopsis thaliana (Mouse-ear cress).